The chain runs to 363 residues: Fructose-bisphosphate aldolase (363 aa).

Substrate is bound by residues R56 and K147. E188 serves as the catalytic Proton acceptor. The Schiff-base intermediate with dihydroxyacetone-P role is filled by K230.

It belongs to the class I fructose-bisphosphate aldolase family.

The catalysed reaction is beta-D-fructose 1,6-bisphosphate = D-glyceraldehyde 3-phosphate + dihydroxyacetone phosphate. The protein operates within carbohydrate degradation; glycolysis; D-glyceraldehyde 3-phosphate and glycerone phosphate from D-glucose: step 4/4. The chain is Fructose-bisphosphate aldolase from Schistosoma mansoni (Blood fluke).